Consider the following 102-residue polypeptide: MVQKAEIKLWSTNVESLNQVVEQIKAIAKKTGVRMRGPIPLPTRRLIVPTLKLPHGEGSKKWDKWELRIHKRLVILDADERVIRQIMRVRVPEDVYIEIRLR.

Belongs to the universal ribosomal protein uS10 family. As to quaternary structure, part of the 30S ribosomal subunit.

Functionally, involved in the binding of tRNA to the ribosomes. The protein is Small ribosomal subunit protein uS10 of Hyperthermus butylicus (strain DSM 5456 / JCM 9403 / PLM1-5).